The sequence spans 185 residues: MINDIYIKSNEKMKVCINNFQIQVNNVRTGRASPELLNSIYVEYFGSKVPLRQISNVVVENYHTLKINIFDDSSTSLIKKAILNSNLDLNPILYGKDIIVPIPGLTEERRTHLIKVIRNNAENARIYIRNIRRDANDKIKNYLKSKIISEDNEHAAQNKIQTMTDDYIKKIDKILSEKEKDLMKF.

It belongs to the RRF family.

Its subcellular location is the cytoplasm. Responsible for the release of ribosomes from messenger RNA at the termination of protein biosynthesis. May increase the efficiency of translation by recycling ribosomes from one round of translation to another. The sequence is that of Ribosome-recycling factor from Buchnera aphidicola subsp. Schizaphis graminum (strain Sg).